Reading from the N-terminus, the 1413-residue chain is DNA-directed RNA polymerase subunit beta' (1413 aa).

Zn(2+) contacts are provided by Cys-72, Cys-74, Cys-87, and Cys-90. Asp-463, Asp-465, and Asp-467 together coordinate Mg(2+). Zn(2+) contacts are provided by Cys-811, Cys-885, Cys-892, and Cys-895.

Belongs to the RNA polymerase beta' chain family. As to quaternary structure, the RNAP catalytic core consists of 2 alpha, 1 beta, 1 beta' and 1 omega subunit. When a sigma factor is associated with the core the holoenzyme is formed, which can initiate transcription. Requires Mg(2+) as cofactor. Zn(2+) serves as cofactor.

It carries out the reaction RNA(n) + a ribonucleoside 5'-triphosphate = RNA(n+1) + diphosphate. In terms of biological role, DNA-dependent RNA polymerase catalyzes the transcription of DNA into RNA using the four ribonucleoside triphosphates as substrates. The sequence is that of DNA-directed RNA polymerase subunit beta' from Ruegeria pomeroyi (strain ATCC 700808 / DSM 15171 / DSS-3) (Silicibacter pomeroyi).